Here is a 195-residue protein sequence, read N- to C-terminus: MNLSEDVLKGIETLSDEKLINDSVFKHIIDTCFLVILKKKTESDLFDNKAVSSVDTIALKQTFSAFIVFILESMKINYDQSSISDLLEEHKLSSSRIDFISNYFKEYRVAIRKHLSVTNFHFPHIIDVNWRLDLFMKSNAVEKLNTPVYLINLTTEQEENVKGKVQFAATLDQLQDLVFKLRDAQKQIERSSIKS.

A COMM domain is found at 124-192; it reads HIIDVNWRLD…DAQKQIERSS (69 aa).

This sequence belongs to the COMM domain-containing protein 3 family. In terms of assembly, component of the commander complex consisting of the CCC subcomplex and the retriever subcomplex. Component of the CCC subcomplex.

Scaffold protein in the commander complex that is essential for endosomal recycling of transmembrane cargos; the commander complex is composed of the CCC subcomplex and the retriever subcomplex. This chain is COMM domain-containing protein 3 (commd3), found in Dictyostelium discoideum (Social amoeba).